A 168-amino-acid chain; its full sequence is Photosystem I assembly protein Ycf3 (168 aa).

TPR repeat units lie at residues 35–68 (AFTYYRDGMSAQSEGNYAEALQNYYEAMRLEMDP), 72–105 (SYILYNIGLIHTSNGEHTKALEYYFRALERNPFL), and 120–153 (GEQAVREGDSEIAEAWFDQAAEYWKQAIALTPGN).

It belongs to the Ycf3 family.

The protein resides in the plastid. The protein localises to the chloroplast thylakoid membrane. Essential for the assembly of the photosystem I (PSI) complex. May act as a chaperone-like factor to guide the assembly of the PSI subunits. This Plantago lanceolata (English plantain) protein is Photosystem I assembly protein Ycf3.